Here is a 209-residue protein sequence, read N- to C-terminus: Probable glutathione peroxidase 8-B (209 aa).

A helical transmembrane segment spans residues valine 18–leucine 40. Cysteine 79 is a catalytic residue.

It belongs to the glutathione peroxidase family.

It is found in the membrane. The enzyme catalyses 2 glutathione + H2O2 = glutathione disulfide + 2 H2O. This is Probable glutathione peroxidase 8-B (gpx8-b) from Xenopus laevis (African clawed frog).